An 835-amino-acid chain; its full sequence is Protein translocase subunit SecA (835 aa).

Residues Q85, 103–107 (GEGKT), and D492 contribute to the ATP site. 4 residues coordinate Zn(2+): C819, C821, C830, and C831.

The protein belongs to the SecA family. As to quaternary structure, monomer and homodimer. Part of the essential Sec protein translocation apparatus which comprises SecA, SecYEG and auxiliary proteins SecDF. Other proteins may also be involved. It depends on Zn(2+) as a cofactor.

It localises to the cell membrane. The protein localises to the cytoplasm. The enzyme catalyses ATP + H2O + cellular proteinSide 1 = ADP + phosphate + cellular proteinSide 2.. Its function is as follows. Part of the Sec protein translocase complex. Interacts with the SecYEG preprotein conducting channel. Has a central role in coupling the hydrolysis of ATP to the transfer of proteins into and across the cell membrane, serving as an ATP-driven molecular motor driving the stepwise translocation of polypeptide chains across the membrane. In Clostridium botulinum (strain ATCC 19397 / Type A), this protein is Protein translocase subunit SecA.